The following is a 250-amino-acid chain: Ubiquinone/menaquinone biosynthesis C-methyltransferase UbiE (250 aa).

S-adenosyl-L-methionine is bound by residues T73, D94, and 122–123 (DA).

This sequence belongs to the class I-like SAM-binding methyltransferase superfamily. MenG/UbiE family.

It catalyses the reaction a 2-demethylmenaquinol + S-adenosyl-L-methionine = a menaquinol + S-adenosyl-L-homocysteine + H(+). It carries out the reaction a 2-methoxy-6-(all-trans-polyprenyl)benzene-1,4-diol + S-adenosyl-L-methionine = a 5-methoxy-2-methyl-3-(all-trans-polyprenyl)benzene-1,4-diol + S-adenosyl-L-homocysteine + H(+). The protein operates within quinol/quinone metabolism; menaquinone biosynthesis; menaquinol from 1,4-dihydroxy-2-naphthoate: step 2/2. Its pathway is cofactor biosynthesis; ubiquinone biosynthesis. In terms of biological role, methyltransferase required for the conversion of demethylmenaquinol (DMKH2) to menaquinol (MKH2) and the conversion of 2-polyprenyl-6-methoxy-1,4-benzoquinol (DDMQH2) to 2-polyprenyl-3-methyl-6-methoxy-1,4-benzoquinol (DMQH2). The chain is Ubiquinone/menaquinone biosynthesis C-methyltransferase UbiE from Coxiella burnetii (strain RSA 493 / Nine Mile phase I).